Reading from the N-terminus, the 253-residue chain is Imidazole glycerol phosphate synthase subunit HisF (253 aa).

Catalysis depends on residues D11 and D130.

It belongs to the HisA/HisF family. Heterodimer of HisH and HisF.

It is found in the cytoplasm. It carries out the reaction 5-[(5-phospho-1-deoxy-D-ribulos-1-ylimino)methylamino]-1-(5-phospho-beta-D-ribosyl)imidazole-4-carboxamide + L-glutamine = D-erythro-1-(imidazol-4-yl)glycerol 3-phosphate + 5-amino-1-(5-phospho-beta-D-ribosyl)imidazole-4-carboxamide + L-glutamate + H(+). It participates in amino-acid biosynthesis; L-histidine biosynthesis; L-histidine from 5-phospho-alpha-D-ribose 1-diphosphate: step 5/9. IGPS catalyzes the conversion of PRFAR and glutamine to IGP, AICAR and glutamate. The HisF subunit catalyzes the cyclization activity that produces IGP and AICAR from PRFAR using the ammonia provided by the HisH subunit. The polypeptide is Imidazole glycerol phosphate synthase subunit HisF (Dehalococcoides mccartyi (strain CBDB1)).